A 128-amino-acid chain; its full sequence is Putative pre-16S rRNA nuclease (128 aa).

The protein belongs to the YqgF nuclease family.

The protein resides in the cytoplasm. Could be a nuclease involved in processing of the 5'-end of pre-16S rRNA. The sequence is that of Putative pre-16S rRNA nuclease from Campylobacter lari (strain RM2100 / D67 / ATCC BAA-1060).